The primary structure comprises 534 residues: Benzaldehyde dehydrogenase, mitochondrial (534 aa).

The N-terminal 29 residues, 1 to 29, are a transit peptide targeting the mitochondrion; sequence MAAHRFSSLLSRSVPLLSRGGKQSYLGRG. NAD(+) contacts are provided by residues 199 to 202, 225 to 228, 258 to 259, 278 to 279, and 301 to 303; these read IPWN, KTAE, GP, GS, and ELG. Glu-301 (proton acceptor) is an active-site residue. Cys-335 functions as the Nucleophile in the catalytic mechanism. Residues 381 to 385 and 432 to 434 each bind NAD(+); these read DQFEK and EIF.

Belongs to the aldehyde dehydrogenase family. Homotetramer. As to expression, expressed predominantly in the upper and lower flower petal lobes, and, at low levels, in flower tubes, pistils, stamens and sepals.

Its subcellular location is the mitochondrion. The catalysed reaction is an aldehyde + NAD(+) + H2O = a carboxylate + NADH + 2 H(+). It catalyses the reaction acetaldehyde + NAD(+) + H2O = acetate + NADH + 2 H(+). The enzyme catalyses benzaldehyde + NAD(+) + H2O = benzoate + NADH + 2 H(+). It carries out the reaction 2-phenylacetaldehyde + NAD(+) + H2O = 2-phenylacetate + NADH + 2 H(+). The protein operates within aromatic compound metabolism. Its activity is regulated as follows. Inhibited by disulfiram. Its function is as follows. Component of the floral volatile benzenoid/phenylpropanoid (FVBP) biosynthetic pathway. Catalyzes the oxidation of benzaldehyde to benzoic acid (BA). Capable of oxidizing a broad spectrum of aliphatic aldehydes; increased carbon chain length results in a decrease in its efficiency. The protein is Benzaldehyde dehydrogenase, mitochondrial of Antirrhinum majus (Garden snapdragon).